A 1457-amino-acid chain; its full sequence is DNA-directed RNA polymerase III subunit RPC1 (1457 aa).

Cys-67, Cys-70, Cys-77, His-80, Cys-107, Cys-110, and Cys-154 together coordinate Zn(2+). Mg(2+) is bound by residues Asp-508, Asp-510, and Asp-512. The bridging helix stretch occupies residues 854 to 866; it reads PPEFLFHSISGRE.

This sequence belongs to the RNA polymerase beta' chain family. Component of the RNA polymerase III (Pol III) complex consisting of 17 subunits.

Its subcellular location is the nucleus. It carries out the reaction RNA(n) + a ribonucleoside 5'-triphosphate = RNA(n+1) + diphosphate. Its function is as follows. DNA-dependent RNA polymerase catalyzes the transcription of DNA into RNA using the four ribonucleoside triphosphates as substrates. Largest and catalytic core component of RNA polymerase III which synthesizes small RNAs, such as 5S rRNA and tRNAs. Forms the polymerase active center together with the second largest subunit. A single-stranded DNA template strand of the promoter is positioned within the central active site cleft of Pol III. A bridging helix emanates from RPC1 and crosses the cleft near the catalytic site and is thought to promote translocation of Pol III by acting as a ratchet that moves the RNA-DNA hybrid through the active site by switching from straight to bent conformations at each step of nucleotide addition. The polypeptide is DNA-directed RNA polymerase III subunit RPC1 (RPC1) (Debaryomyces hansenii (strain ATCC 36239 / CBS 767 / BCRC 21394 / JCM 1990 / NBRC 0083 / IGC 2968) (Yeast)).